The chain runs to 275 residues: F420-dependent methylenetetrahydromethanopterin dehydrogenase (275 aa).

Belongs to the MTD family.

The enzyme catalyses 5,10-methylenetetrahydromethanopterin + oxidized coenzyme F420-(gamma-L-Glu)(n) + 2 H(+) = 5,10-methenyl-5,6,7,8-tetrahydromethanopterin + reduced coenzyme F420-(gamma-L-Glu)(n). The protein operates within one-carbon metabolism; methanogenesis from CO(2); 5,10-methylene-5,6,7,8-tetrahydromethanopterin from 5,10-methenyl-5,6,7,8-tetrahydromethanopterin (coenzyme F420 route): step 1/1. Its function is as follows. Catalyzes the reversible reduction of methenyl-H(4)MPT(+) to methylene-H(4)MPT. This Methanobrevibacter smithii (strain ATCC 35061 / DSM 861 / OCM 144 / PS) protein is F420-dependent methylenetetrahydromethanopterin dehydrogenase.